The following is a 340-amino-acid chain: Protein S-acyltransferase 10 (340 aa).

2 helical membrane-spanning segments follow: residues 34-54 and 66-86; these read LLLK…LFLF and PWYM…YFVT. In terms of domain architecture, DHHC spans 162-212; the sequence is LTCGYCHVEQPPRTKHCHDCDRCVLQFDHHCVWLGTCIGQKNHSKFWWYIC. Catalysis depends on Cys192, which acts as the S-palmitoyl cysteine intermediate. Transmembrane regions (helical) follow at residues 207–227 and 241–261; these read FWWY…MYVD and IIIL…LLLI.

The protein belongs to the DHHC palmitoyltransferase family. As to expression, expressed in mature embryos, embryo sacs, cotyledons, whole seedlings, hydathodes, guard cells, sites of lateral root initiation, root tips and phloem, but not in xylem.

Its subcellular location is the vacuole membrane. The catalysed reaction is L-cysteinyl-[protein] + hexadecanoyl-CoA = S-hexadecanoyl-L-cysteinyl-[protein] + CoA. In terms of biological role, S-acyltransferase involved in protein lipid modification. Catalyzes the palmitoylation of proteins peripheral or integral to the tonoplast. Required for the tonoplast localization of CBL2, CBL3 and CBL6, but not for the plasma membrane localization of CBL9, for the endosome localization of RABF1 or for the endomembrane localization of RABF2B. The protein is Protein S-acyltransferase 10 (PAT10) of Arabidopsis thaliana (Mouse-ear cress).